We begin with the raw amino-acid sequence, 551 residues long: Hedycaryol synthase TPS20CT (551 aa).

5 residues coordinate (2E,6E)-farnesyl diphosphate: Arg266, Asp303, Asp307, Arg444, and Asp447. Mg(2+) contacts are provided by Asp303 and Asp307. A DDXXD motif motif is present at residues 303-307 (DDIYD). Mg(2+) contacts are provided by Asp447, Ser451, and Glu455.

Belongs to the terpene synthase family. Tpsb subfamily. It depends on Mg(2+) as a cofactor. Mn(2+) is required as a cofactor. As to expression, highly expressed in glandular trichomes.

The catalysed reaction is (2E,6E)-farnesyl diphosphate + H2O = (2E,6E)-hedycaryol + diphosphate. It functions in the pathway secondary metabolite biosynthesis; terpenoid biosynthesis. Its function is as follows. Involved in sesquiterpene olefins biosynthesis, constituants of cannabinoids and terpenoids-rich resins. Catalyzes primarily the conversion of (2E)-farnesyl diphosphate to hedycaryol, which is spontaneously converted to elemol as a thermal degradation product. This Cannabis sativa (Hemp) protein is Hedycaryol synthase TPS20CT.